The following is a 309-amino-acid chain: Methionyl-tRNA formyltransferase (309 aa).

Residue 112-115 participates in (6S)-5,6,7,8-tetrahydrofolate binding; it reads SLLP.

This sequence belongs to the Fmt family.

The catalysed reaction is L-methionyl-tRNA(fMet) + (6R)-10-formyltetrahydrofolate = N-formyl-L-methionyl-tRNA(fMet) + (6S)-5,6,7,8-tetrahydrofolate + H(+). Attaches a formyl group to the free amino group of methionyl-tRNA(fMet). The formyl group appears to play a dual role in the initiator identity of N-formylmethionyl-tRNA by promoting its recognition by IF2 and preventing the misappropriation of this tRNA by the elongation apparatus. The protein is Methionyl-tRNA formyltransferase of Bartonella quintana (strain Toulouse) (Rochalimaea quintana).